The primary structure comprises 520 residues: Maturase K (520 aa).

The protein belongs to the intron maturase 2 family. MatK subfamily.

The protein localises to the plastid. It is found in the chloroplast. Its function is as follows. Usually encoded in the trnK tRNA gene intron. Probably assists in splicing its own and other chloroplast group II introns. The sequence is that of Maturase K from Ruscus aculeatus (Butcher's broom).